The chain runs to 370 residues: High affinity iron permease ftrA (370 aa).

7 consecutive transmembrane segments (helical) span residues 5–25, 52–72, 88–108, 148–168, 179–199, 206–226, and 293–313; these read VFAVPIFFICFRECVETSIIV, VWWGVAIGLFISVCIGAGMIG, LWEGIFSLIASVIITIMGAAL, AMFLLPFITVLREGLEAVVFI, AFPLPVFTGILAGVAIGYLLY, SLQIFLIISTCILYLVAAGLF, and YGSVLSYNLYWIAVIVWFVAM. A disordered region spans residues 335-370; it reads RKSAEPGNGEQDVEVSTIPSDLQTESKIPKSGASLV. Residues 351–360 are compositionally biased toward polar residues; that stretch reads TIPSDLQTES.

This sequence belongs to the oxidase-dependent Fe transporter (OFeT) (TC 9.A.10.1) family.

It is found in the cell membrane. Its function is as follows. High affinity iron permease; part of the reductive iron assimilatory system (RIA), a siderophore-independent high affinity iron uptake mechanism. The protein is High affinity iron permease ftrA of Aspergillus fumigatus (strain ATCC MYA-4609 / CBS 101355 / FGSC A1100 / Af293) (Neosartorya fumigata).